The sequence spans 598 residues: DNA primase (598 aa).

The CHC2-type zinc finger occupies 38–62 (CPFHDEKTPSFTVSEDKQICHCFGC). One can recognise a Toprim domain in the interval 260 to 341 (DEIILLEGFM…NVYVVQLPSG (82 aa)). E266, D310, and D312 together coordinate Mg(2+).

Belongs to the DnaG primase family. As to quaternary structure, monomer. Interacts with DnaB. Requires Zn(2+) as cofactor. The cofactor is Mg(2+).

It carries out the reaction ssDNA + n NTP = ssDNA/pppN(pN)n-1 hybrid + (n-1) diphosphate.. Its function is as follows. RNA polymerase that catalyzes the synthesis of short RNA molecules used as primers for DNA polymerase during DNA replication. The sequence is that of DNA primase from Staphylococcus epidermidis (strain ATCC 12228 / FDA PCI 1200).